Reading from the N-terminus, the 103-residue chain is Large ribosomal subunit protein bL21 (103 aa).

It belongs to the bacterial ribosomal protein bL21 family. In terms of assembly, part of the 50S ribosomal subunit. Contacts protein L20.

This protein binds to 23S rRNA in the presence of protein L20. The chain is Large ribosomal subunit protein bL21 from Shewanella loihica (strain ATCC BAA-1088 / PV-4).